The primary structure comprises 120 residues: uncharacterized protein (120 aa).

The signal sequence occupies residues 1-19 (MTSFAVVARLITRAPRVRA). Disordered stretches follow at residues 48-71 (VAKKADEGAQTISDAAGNLKDKAK) and 90-120 (DTVTGKTEETKESIKATAKTVERSMNTKNLK). Basic and acidic residues predominate over residues 90 to 103 (DTVTGKTEETKESI).

This is an uncharacterized protein from Arabidopsis thaliana (Mouse-ear cress).